Reading from the N-terminus, the 386-residue chain is Protein lin-8 (386 aa).

The sufficient for interaction with lin-35 stretch occupies residues 175 to 285 (LGLEARRASK…FSQQYGGGGS (111 aa)). The tract at residues 212–240 (EEPYEETGSNWSDPAPEPSQSKSQSPEAK) is disordered. Low complexity predominate over residues 229 to 240 (PSQSKSQSPEAK).

Belongs to the lin-8 family. In terms of assembly, interacts with lin-35 (via C-terminus). Widely expressed throughout development, with particularly prominent expression in the germline and in neuronal nuclei of the head (at protein level).

Its subcellular location is the nucleus. Acts as a synthetic multivulva class A (synMuvA) protein and redundantly inhibits lin-3/EGF expression to prevent inappropriate vulva induction. The polypeptide is Protein lin-8 (Caenorhabditis elegans).